Consider the following 622-residue polypeptide: Threonine--tRNA ligase (622 aa).

The editing domain stretch occupies residues 1-134 (MKTLLIHSDY…GHPLSELSRK (134 aa)). The catalytic stretch occupies residues 199-498 (PHVKYIKEKE…TLEDKPPALP (300 aa)). Cysteine 291, histidine 343, and histidine 467 together coordinate Zn(2+).

It belongs to the class-II aminoacyl-tRNA synthetase family. Homodimer. It depends on Zn(2+) as a cofactor.

It is found in the cytoplasm. It catalyses the reaction tRNA(Thr) + L-threonine + ATP = L-threonyl-tRNA(Thr) + AMP + diphosphate + H(+). Functionally, catalyzes the attachment of threonine to tRNA(Thr) in a two-step reaction: L-threonine is first activated by ATP to form Thr-AMP and then transferred to the acceptor end of tRNA(Thr). Also edits incorrectly charged L-seryl-tRNA(Thr). The sequence is that of Threonine--tRNA ligase from Methanococcus vannielii (strain ATCC 35089 / DSM 1224 / JCM 13029 / OCM 148 / SB).